Reading from the N-terminus, the 259-residue chain is 4-hydroxy-tetrahydrodipicolinate reductase (259 aa).

NAD(+)-binding positions include 9-14 and Glu35; that span reads GAGGRM. Arg36 is a binding site for NADP(+). NAD(+) is bound by residues 92–94 and 116–119; these read GTT and APNM. His149 (proton donor/acceptor) is an active-site residue. His150 serves as a coordination point for (S)-2,3,4,5-tetrahydrodipicolinate. Lys153 (proton donor) is an active-site residue. (S)-2,3,4,5-tetrahydrodipicolinate is bound at residue 159-160; the sequence is GT.

It belongs to the DapB family.

Its subcellular location is the cytoplasm. It catalyses the reaction (S)-2,3,4,5-tetrahydrodipicolinate + NAD(+) + H2O = (2S,4S)-4-hydroxy-2,3,4,5-tetrahydrodipicolinate + NADH + H(+). It carries out the reaction (S)-2,3,4,5-tetrahydrodipicolinate + NADP(+) + H2O = (2S,4S)-4-hydroxy-2,3,4,5-tetrahydrodipicolinate + NADPH + H(+). It participates in amino-acid biosynthesis; L-lysine biosynthesis via DAP pathway; (S)-tetrahydrodipicolinate from L-aspartate: step 4/4. Functionally, catalyzes the conversion of 4-hydroxy-tetrahydrodipicolinate (HTPA) to tetrahydrodipicolinate. The polypeptide is 4-hydroxy-tetrahydrodipicolinate reductase (Nitratidesulfovibrio vulgaris (strain DP4) (Desulfovibrio vulgaris)).